The sequence spans 215 residues: Ribonuclease (215 aa).

An N-terminal signal peptide occupies residues 1-22 (MKKIVVLLGMLLAPWFSSAVQA). Active-site residues include H62, E102, and H106. The tract at residues 144–166 (KPLPAQGGSGQCQRLAGPGQHHG) is disordered.

The protein belongs to the RNase T2 family.

The protein resides in the periplasm. It is found in the cytoplasm. Functionally, one of the few RNases that cleave the phosphodiester bond between any two nucleotide. Shows a preference for adenylic acid. This is Ribonuclease from Aeromonas hydrophila.